We begin with the raw amino-acid sequence, 454 residues long: Phosphoglucosamine mutase (454 aa).

The Phosphoserine intermediate role is filled by S101. Mg(2+) contacts are provided by S101, D243, D245, and D247. S101 carries the phosphoserine modification.

The protein belongs to the phosphohexose mutase family. It depends on Mg(2+) as a cofactor. Activated by phosphorylation.

It catalyses the reaction alpha-D-glucosamine 1-phosphate = D-glucosamine 6-phosphate. Its function is as follows. Catalyzes the conversion of glucosamine-6-phosphate to glucosamine-1-phosphate. The sequence is that of Phosphoglucosamine mutase from Geotalea daltonii (strain DSM 22248 / JCM 15807 / FRC-32) (Geobacter daltonii).